A 203-amino-acid polypeptide reads, in one-letter code: Holliday junction branch migration complex subunit RuvA (203 aa).

A domain I region spans residues 1-64 (MIGRLRGIVL…EDAQLLFGFN (64 aa)). The domain II stretch occupies residues 65–142 (NKQERTLFRE…KGLHGDLFTP (78 aa)). Residues 143 to 154 (AADLVLTSPASP) are flexible linker. The segment at 155 to 203 (AVDDAEAEAVAALVSLGYKPQEASRMVSKVAQADASSETLIREALRAAL) is domain III.

The protein belongs to the RuvA family. In terms of assembly, homotetramer. Forms an RuvA(8)-RuvB(12)-Holliday junction (HJ) complex. HJ DNA is sandwiched between 2 RuvA tetramers; dsDNA enters through RuvA and exits via RuvB. An RuvB hexamer assembles on each DNA strand where it exits the tetramer. Each RuvB hexamer is contacted by two RuvA subunits (via domain III) on 2 adjacent RuvB subunits; this complex drives branch migration. In the full resolvosome a probable DNA-RuvA(4)-RuvB(12)-RuvC(2) complex forms which resolves the HJ.

Its subcellular location is the cytoplasm. Functionally, the RuvA-RuvB-RuvC complex processes Holliday junction (HJ) DNA during genetic recombination and DNA repair, while the RuvA-RuvB complex plays an important role in the rescue of blocked DNA replication forks via replication fork reversal (RFR). RuvA specifically binds to HJ cruciform DNA, conferring on it an open structure. The RuvB hexamer acts as an ATP-dependent pump, pulling dsDNA into and through the RuvAB complex. HJ branch migration allows RuvC to scan DNA until it finds its consensus sequence, where it cleaves and resolves the cruciform DNA. This Cronobacter sakazakii (strain ATCC BAA-894) (Enterobacter sakazakii) protein is Holliday junction branch migration complex subunit RuvA.